We begin with the raw amino-acid sequence, 164 residues long: 2S seed storage protein 1 (164 aa).

Residues 1–21 (MANKLFLVCAALALCFLLTNA) form the signal peptide. 3 consecutive propeptides follow at residues 22-37 (SIYR…DATN), 74-83 (EFDFEDDMEN), and 163-164 (FY).

Belongs to the 2S seed storage albumins family. The mature protein consists of a small and a large chain linked by disulfide bonds.

In terms of biological role, this is a 2S seed storage protein. The protein is 2S seed storage protein 1 (AT2S1) of Arabidopsis thaliana (Mouse-ear cress).